The following is a 1645-amino-acid chain: Histone-lysine N-methyltransferase set-26 (1645 aa).

Disordered regions lie at residues methionine 1–proline 82, glutamate 109–glutamate 132, aspartate 200–proline 228, threonine 417–proline 606, and threonine 651–alanine 789. 2 stretches are compositionally biased toward low complexity: residues glutamate 16–isoleucine 31 and glutamine 67–proline 82. A compositionally biased stretch (polar residues) spans proline 207 to proline 228. Composition is skewed to low complexity over residues arginine 429–arginine 443 and arginine 453–alanine 467. Basic and acidic residues predominate over residues methionine 559–proline 578. Pro residues predominate over residues proline 592 to valine 603. The span at threonine 651 to tyrosine 675 shows a compositional bias: polar residues. Composition is skewed to basic residues over residues glutamine 684–serine 699 and histidine 731–arginine 741. Positions serine 780–alanine 789 are enriched in acidic residues. The PHD-type zinc finger occupies threonine 794–arginine 842. Positions alanine 865–valine 904 are disordered. Polar residues predominate over residues lysine 881–proline 899. The region spanning methionine 973–aspartate 1064 is the SET domain. Basic and acidic residues predominate over residues arginine 1099–valine 1172. Disordered stretches follow at residues arginine 1099–valine 1333, serine 1371–glycine 1536, and proline 1548–asparagine 1645. A coiled-coil region spans residues methionine 1103–serine 1217. Over residues glutamate 1173–serine 1183 the composition is skewed to low complexity. The span at alanine 1188 to arginine 1210 shows a compositional bias: basic and acidic residues. Polar residues-rich tracts occupy residues threonine 1258 to threonine 1268 and threonine 1300 to asparagine 1311. Composition is skewed to basic and acidic residues over residues serine 1382–asparagine 1427, lysine 1434–proline 1450, and lysine 1468–serine 1485. The segment covering serine 1554–alanine 1565 has biased composition (polar residues).

It belongs to the class V-like SAM-binding methyltransferase superfamily. Expressed both in the germline and in somatic tissues.

It localises to the nucleus. It carries out the reaction L-lysyl(9)-[histone H3] + 3 S-adenosyl-L-methionine = N(6),N(6),N(6)-trimethyl-L-lysyl(9)-[histone H3] + 3 S-adenosyl-L-homocysteine + 3 H(+). Its function is as follows. Histone methyltransferase that mediates trimethylation of 'Lys-9' of histone H3 in vitro. Involved in transcriptional regulation. Plays a role in the negative regulation of lifespan and in heat resistance. Together with set-9, negatively regulates lifespan in a germline-independent, partially daf-16-dependent fashion. Together with set-9, plays a role in germline development and maintenance and might play a role in the restriction of the trimethylation mark on histone H3 'Lys-4'(H3K4me3) to target genes specifically in the germline. Together with spr-5, required for transgenerational fertility. The sequence is that of Histone-lysine N-methyltransferase set-26 from Caenorhabditis elegans.